A 138-amino-acid chain; its full sequence is Ribulose bisphosphate carboxylase small subunit (138 aa).

Belongs to the RuBisCO small chain family. As to quaternary structure, heterohexadecamer of 8 large and 8 small subunits.

The protein resides in the plastid. It localises to the chloroplast. Functionally, ruBisCO catalyzes two reactions: the carboxylation of D-ribulose 1,5-bisphosphate, the primary event in carbon dioxide fixation, as well as the oxidative fragmentation of the pentose substrate in the photorespiration process. Both reactions occur simultaneously and in competition at the same active site. Although the small subunit is not catalytic it is essential for maximal activity. This is Ribulose bisphosphate carboxylase small subunit from Cyanidium caldarium (Red alga).